The following is a 206-amino-acid chain: Small ribosomal subunit protein uS4 (206 aa).

The S4 RNA-binding domain maps to 98 to 176 (RRLDNVVYRL…APKWLEANRE (79 aa)).

It belongs to the universal ribosomal protein uS4 family. As to quaternary structure, part of the 30S ribosomal subunit. Contacts protein S5. The interaction surface between S4 and S5 is involved in control of translational fidelity.

One of the primary rRNA binding proteins, it binds directly to 16S rRNA where it nucleates assembly of the body of the 30S subunit. In terms of biological role, with S5 and S12 plays an important role in translational accuracy. The chain is Small ribosomal subunit protein uS4 from Gloeobacter violaceus (strain ATCC 29082 / PCC 7421).